Consider the following 257-residue polypeptide: uncharacterized protein (257 aa).

Residues Asp-34, Asp-60, Val-61, Asn-87, Tyr-152, and Lys-156 each coordinate NAD(+). The active-site Proton acceptor is Tyr-152.

This sequence belongs to the short-chain dehydrogenases/reductases (SDR) family.

This is an uncharacterized protein from Bacillus subtilis (strain 168).